Here is a 549-residue protein sequence, read N- to C-terminus: CTP synthase (549 aa).

Residues 1–270 are amidoligase domain; the sequence is MTKFVFVTGG…DRLICEELRL (270 aa). Position 13 (S13) interacts with CTP. UTP is bound at residue S13. Residues 14-19 and D71 each bind ATP; that span reads SLGKGI. D71 and E144 together coordinate Mg(2+). CTP-binding positions include 151-153, 191-196, and K227; these read DIE and KTKPTQ. Residues 191–196 and K227 contribute to the UTP site; that span reads KTKPTQ. The Glutamine amidotransferase type-1 domain maps to 295–547; the sequence is TIGMVGKYVD…VEAALAAQRQ (253 aa). An L-glutamine-binding site is contributed by G356. C383 serves as the catalytic Nucleophile; for glutamine hydrolysis. L-glutamine contacts are provided by residues 384-387, E407, and R473; that span reads LGMQ. Residues H520 and E522 contribute to the active site.

Belongs to the CTP synthase family. As to quaternary structure, homotetramer.

It catalyses the reaction UTP + L-glutamine + ATP + H2O = CTP + L-glutamate + ADP + phosphate + 2 H(+). It carries out the reaction L-glutamine + H2O = L-glutamate + NH4(+). The catalysed reaction is UTP + NH4(+) + ATP = CTP + ADP + phosphate + 2 H(+). It participates in pyrimidine metabolism; CTP biosynthesis via de novo pathway; CTP from UDP: step 2/2. Allosterically activated by GTP, when glutamine is the substrate; GTP has no effect on the reaction when ammonia is the substrate. The allosteric effector GTP functions by stabilizing the protein conformation that binds the tetrahedral intermediate(s) formed during glutamine hydrolysis. Inhibited by the product CTP, via allosteric rather than competitive inhibition. In terms of biological role, catalyzes the ATP-dependent amination of UTP to CTP with either L-glutamine or ammonia as the source of nitrogen. Regulates intracellular CTP levels through interactions with the four ribonucleotide triphosphates. This Cupriavidus metallidurans (strain ATCC 43123 / DSM 2839 / NBRC 102507 / CH34) (Ralstonia metallidurans) protein is CTP synthase.